The following is a 691-amino-acid chain: MDAMTNKRLRLTLKTVRAFIFLGAFAALAAAAVFMTVILIAKYQGAPSVQVPQSTILYASDGSKLGETNYGEKRYWVPLKDMNPTIVKATVAIEDQNFYDHHGFDYKRMAGAALADLKAFAKVQGASTITQQYARNLYLEHDKTWKRKWNEAFYTIRLEQNYSKDEILEGYLNTIYYGHGAYGIEAASRLYFGKHAKNLTDAEAALLAGIPKGPSGYSPYVNETKAKERQKTIVRMMEKQQMISQKKADELIKEPLSYQPLNKQVSKRKAPYFYDNAMRELEKKLGMTREQIETSGLNVYTTVDKRMQRIAEETITETVNAGSDIQVGFSAIDPRTGNVLALVGGRDYQKSPFDRTTQAKRQPASTIKPLLYYKAIQSGFTPVTLMKSEETEFQIDAKGETYSPSNYNGYYANKPITLLQALALSDNIYAVKTHLFLGTNKLVKTAKEFGITAHLQALPSLALGTEPVRPIEMVNAYAMLANGGKKIEPTFISRVTDAAGHVLYENPNQHKQVLDEKAAFVTASMMTGMFDIDLNGYTSVTGRTIANRLTRTYAGKSGTTSADSWMIGFNPKLAAGVWTGYDKNSTIDSVEEKSYAKTIWADFMEDALKGEPETAFKPPKGVTGVYIDPETGYSSGPGCAAKHYTYFVKGTEPANVCYGAEPAKQTKDRLPSKEKPASEKKWWDKWLGRHH.

Residues M1–F19 lie on the Cytoplasmic side of the membrane. A helical; Signal-anchor for type II membrane protein transmembrane segment spans residues I20–I40. Residues A41–H691 lie on the Extracellular side of the membrane. The segment at T55 to E223 is transglycosylase. E94 serves as the catalytic Proton donor; for transglycosylase activity. The interval V327–E605 is transpeptidase. S365 acts as the Acyl-ester intermediate; for transpeptidase activity in catalysis. A disordered region spans residues A663–H691. Positions K664–H691 are enriched in basic and acidic residues.

In the N-terminal section; belongs to the glycosyltransferase 51 family. The protein in the C-terminal section; belongs to the transpeptidase family.

It localises to the cell membrane. The catalysed reaction is [GlcNAc-(1-&gt;4)-Mur2Ac(oyl-L-Ala-gamma-D-Glu-L-Lys-D-Ala-D-Ala)](n)-di-trans,octa-cis-undecaprenyl diphosphate + beta-D-GlcNAc-(1-&gt;4)-Mur2Ac(oyl-L-Ala-gamma-D-Glu-L-Lys-D-Ala-D-Ala)-di-trans,octa-cis-undecaprenyl diphosphate = [GlcNAc-(1-&gt;4)-Mur2Ac(oyl-L-Ala-gamma-D-Glu-L-Lys-D-Ala-D-Ala)](n+1)-di-trans,octa-cis-undecaprenyl diphosphate + di-trans,octa-cis-undecaprenyl diphosphate + H(+). It carries out the reaction Preferential cleavage: (Ac)2-L-Lys-D-Ala-|-D-Ala. Also transpeptidation of peptidyl-alanyl moieties that are N-acyl substituents of D-alanine.. It participates in cell wall biogenesis; peptidoglycan biosynthesis. Involved in the polymerization and cross-linking of spore peptidoglycan. May be required for synthesis of the spore germ cell wall, the first layer of peptidoglycan synthesized on the surface of the inner forespore membrane. The polypeptide is Penicillin-binding protein 2D (pbpG) (Bacillus subtilis (strain 168)).